We begin with the raw amino-acid sequence, 149 residues long: D-aminoacyl-tRNA deacylase (149 aa).

The short motif at 137–138 (GP) is the Gly-cisPro motif, important for rejection of L-amino acids element.

This sequence belongs to the DTD family. As to quaternary structure, homodimer.

Its subcellular location is the cytoplasm. The enzyme catalyses glycyl-tRNA(Ala) + H2O = tRNA(Ala) + glycine + H(+). It catalyses the reaction a D-aminoacyl-tRNA + H2O = a tRNA + a D-alpha-amino acid + H(+). Its function is as follows. An aminoacyl-tRNA editing enzyme that deacylates mischarged D-aminoacyl-tRNAs. Also deacylates mischarged glycyl-tRNA(Ala), protecting cells against glycine mischarging by AlaRS. Acts via tRNA-based rather than protein-based catalysis; rejects L-amino acids rather than detecting D-amino acids in the active site. By recycling D-aminoacyl-tRNA to D-amino acids and free tRNA molecules, this enzyme counteracts the toxicity associated with the formation of D-aminoacyl-tRNA entities in vivo and helps enforce protein L-homochirality. The sequence is that of D-aminoacyl-tRNA deacylase from Clostridium botulinum (strain ATCC 19397 / Type A).